Reading from the N-terminus, the 87-residue chain is Small ribosomal subunit protein eS21 (87 aa).

This sequence belongs to the eukaryotic ribosomal protein eS21 family. In terms of assembly, component of the small ribosomal subunit. Mature ribosomes consist of a small (40S) and a large (60S) subunit. The 40S subunit contains about 33 different proteins and 1 molecule of RNA (18S). The 60S subunit contains about 49 different proteins and 3 molecules of RNA (25S, 5.8S and 5S).

It localises to the cytoplasm. In terms of biological role, required for the processing of the 20S rRNA-precursor to mature 18S rRNA in a late step of the maturation of 40S ribosomal subunits. Has a physiological role leading to 18S rRNA stability. The protein is Small ribosomal subunit protein eS21 (RPS21) of Eremothecium gossypii (strain ATCC 10895 / CBS 109.51 / FGSC 9923 / NRRL Y-1056) (Yeast).